The chain runs to 397 residues: Putative efflux system protein YvrP (397 aa).

The helical transmembrane segment at 8–28 (LIGGAICAGVLVLAGIGAGGF) threads the bilayer. Residues 106-183 (EDHSDEVEQA…KELAGLTKNK (78 aa)) are a coiled coil.

This sequence belongs to the membrane fusion protein (MFP) (TC 8.A.1) family.

The protein resides in the cell membrane. The sequence is that of Putative efflux system protein YvrP (yvrP) from Bacillus subtilis (strain 168).